A 452-amino-acid polypeptide reads, in one-letter code: FAD transporter (452 aa).

Helical transmembrane passes span 21-41 (LPNLIGIMTILGFSLADTFFI), 49-69 (LAAISFTFPVTLIISSIAIGV), 96-116 (ALLLTFILIASLSALGSIFIE), 131-151 (LIHDYMMYWYVGAPLLVLLMV), 167-187 (MIMTLAAIINLILDPLLIFGI), 199-219 (AIATLFSWLVALSLSGYLLII), 248-270 (AALMNLINPLANAVIMAMLAHID), 283-303 (LESVLLIVVMALSSSLMPFIA), 324-344 (FILVFQTLLYIPLAFFAQPLA), 357-377 (LSFYILVLPCAYGPLGIVIIF), 392-412 (VINLCRLVLLMLPLAALGSYI), and 417-437 (GLLLALPITNLLMGIACYYLA).

It belongs to the multi antimicrobial extrusion (MATE) (TC 2.A.66.1) family.

It localises to the cell inner membrane. Flavin adenine dinucleotide (FAD) transporter that facilitates export of flavin electron shuttles. The polypeptide is FAD transporter (Shewanella oneidensis (strain ATCC 700550 / JCM 31522 / CIP 106686 / LMG 19005 / NCIMB 14063 / MR-1)).